The sequence spans 244 residues: Phosphoadenosine 5'-phosphosulfate reductase (244 aa).

The active-site Nucleophile; cysteine thiosulfonate intermediate is the cysteine 239.

It belongs to the PAPS reductase family. CysH subfamily.

It localises to the cytoplasm. It carries out the reaction [thioredoxin]-disulfide + sulfite + adenosine 3',5'-bisphosphate + 2 H(+) = [thioredoxin]-dithiol + 3'-phosphoadenylyl sulfate. It functions in the pathway sulfur metabolism; hydrogen sulfide biosynthesis; sulfite from sulfate: step 3/3. In terms of biological role, catalyzes the formation of sulfite from phosphoadenosine 5'-phosphosulfate (PAPS) using thioredoxin as an electron donor. The sequence is that of Phosphoadenosine 5'-phosphosulfate reductase from Klebsiella pneumoniae subsp. pneumoniae (strain ATCC 700721 / MGH 78578).